A 490-amino-acid polypeptide reads, in one-letter code: Cytochrome P450 71A22 (490 aa).

The chain crosses the membrane as a helical span at residues 2 to 22 (ESMIRIILLSLIIFITILFFI). Cysteine 432 is a heme binding site.

Belongs to the cytochrome P450 family. Heme serves as cofactor.

The protein localises to the membrane. The chain is Cytochrome P450 71A22 (CYP71A22) from Arabidopsis thaliana (Mouse-ear cress).